The primary structure comprises 1830 residues: Dedicator of cytokinesis protein 2 (1830 aa).

An SH3 domain is found at 8 to 69 (DKERHGVAIY…PKSFIHIKEV (62 aa)). Lys-304 is modified (N6-acetyllysine). The C2 DOCK-type domain maps to 423–607 (RNDIYITLLQ…DVFSISTLVC (185 aa)). Residues Ser-588 and Ser-593 each carry the phosphoserine modification. The residue at position 738 (Lys-738) is an N6-acetyllysine. An interaction with CRKL region spans residues 939–1476 (CMTAILNQMG…TSFVTAYKLP (538 aa)). One can recognise a DOCKER domain in the interval 1211–1622 (YKDNNREEMY…VEKEYGVREM (412 aa)). Polar residues predominate over residues 1651–1665 (MNSDCSTPSKPTSES). The tract at residues 1651-1704 (MNSDCSTPSKPTSESFDLELASPKTPRVEQEEPISPGSTLPEVKLRRSKKRTKR) is disordered. Ser-1685, Ser-1706, Ser-1731, and Ser-1784 each carry phosphoserine.

It belongs to the DOCK family. In terms of assembly, homodimer. Interacts with RAC1 and RAC2. Interacts with CRKL and VAV. Interacts with CD3Z. As to expression, specifically expressed in hematopoietic cells. Highly expressed in peripheral blood leukocytes, and expressed at intermediate level in thymus and spleen. Expressed at very low level in the small intestine and colon.

The protein resides in the endomembrane system. It is found in the cytoplasm. Its subcellular location is the cytoskeleton. Involved in cytoskeletal rearrangements required for lymphocyte migration in response of chemokines. Activates RAC1 and RAC2, but not CDC42, by functioning as a guanine nucleotide exchange factor (GEF), which exchanges bound GDP for free GTP. May also participate in IL2 transcriptional activation via the activation of RAC2. The polypeptide is Dedicator of cytokinesis protein 2 (DOCK2) (Homo sapiens (Human)).